The sequence spans 423 residues: COP9 signalosome complex subunit 3 (423 aa).

At alanine 2 the chain carries N-acetylalanine. A PCI domain is found at 197 to 365; the sequence is NFERALYFYE…GMVSFHDNPE (169 aa). The tract at residues 402–423 is disordered; it reads QFVQKSMGSQEDDSGNKPSSYS. Phosphoserine is present on residues serine 407, serine 410, and serine 423.

It belongs to the CSN3 family. Component of the CSN complex, composed of COPS1/GPS1, COPS2, COPS3, COPS4, COPS5, COPS6, COPS7 (COPS7A or COPS7B), COPS8 and COPS9. In the complex, it probably interacts directly with COPS1, COPS4, COPS8 and COPS9. Interacts with CK2 and PKD. Interacts with the translation initiation factor EIF3S6 and IKBKG. Interacts with ERCC6.

It localises to the cytoplasm. It is found in the nucleus. Functionally, component of the COP9 signalosome complex (CSN), a complex involved in various cellular and developmental processes. The CSN complex is an essential regulator of the ubiquitin (Ubl) conjugation pathway by mediating the deneddylation of the cullin subunits of SCF-type E3 ligase complexes, leading to decrease the Ubl ligase activity of SCF-type complexes such as SCF, CSA or DDB2. The complex is also involved in phosphorylation of p53/TP53, c-jun/JUN, IkappaBalpha/NFKBIA, ITPK1 and IRF8/ICSBP, possibly via its association with CK2 and PKD kinases. CSN-dependent phosphorylation of TP53 and JUN promotes and protects degradation by the Ubl system, respectively. Essential to maintain the survival of epiblast cells and thus the development of the postimplantation embryo. The protein is COP9 signalosome complex subunit 3 (COPS3) of Bos taurus (Bovine).